The primary structure comprises 192 residues: MNTEDVLAVFREAGAILEGHFILTSGLRSPVFLQKARVFMHADKTEKLCKALAEKIQAADLGPIDYVVGPAIGGLIPSYETSRHLRVPSVWVERENGVFRLRRFDVPKGARVVIVEDIVTTGLSIRETIDCMKDLGIEVVAAACIVDRSAGKADVGTKLIALAEYEVPAYPADKLPPELAAIPAVKPGSRNI.

Residue 116-124 coordinates 5-phospho-alpha-D-ribose 1-diphosphate; that stretch reads EDIVTTGLS. Residues Thr120 and Arg148 each coordinate orotate.

Belongs to the purine/pyrimidine phosphoribosyltransferase family. PyrE subfamily. Homodimer. Requires Mg(2+) as cofactor.

It carries out the reaction orotidine 5'-phosphate + diphosphate = orotate + 5-phospho-alpha-D-ribose 1-diphosphate. It functions in the pathway pyrimidine metabolism; UMP biosynthesis via de novo pathway; UMP from orotate: step 1/2. Catalyzes the transfer of a ribosyl phosphate group from 5-phosphoribose 1-diphosphate to orotate, leading to the formation of orotidine monophosphate (OMP). The polypeptide is Orotate phosphoribosyltransferase (Brucella anthropi (strain ATCC 49188 / DSM 6882 / CCUG 24695 / JCM 21032 / LMG 3331 / NBRC 15819 / NCTC 12168 / Alc 37) (Ochrobactrum anthropi)).